The chain runs to 168 residues: MSRSRINGNFIDKTFSIVANILLRIIPTTSGEKEAFTYYRDGMSAQSEGNYAEALQNYYEAMRLEIDPYDRSYILYNIGLIHTSNGEHTKALEYYFRALERNPFLPQAFNNMAVICHYRGEQAIRQGDSEIAEAWFDQAAEYWKQAIALTPGNYIEAHNWLKITRRFE.

TPR repeat units follow at residues 35–68 (AFTYYRDGMSAQSEGNYAEALQNYYEAMRLEIDP), 72–105 (SYILYNIGLIHTSNGEHTKALEYYFRALERNPFL), and 120–153 (GEQAIRQGDSEIAEAWFDQAAEYWKQAIALTPGN).

This sequence belongs to the Ycf3 family.

The protein localises to the plastid. It localises to the chloroplast thylakoid membrane. In terms of biological role, essential for the assembly of the photosystem I (PSI) complex. May act as a chaperone-like factor to guide the assembly of the PSI subunits. In Helianthus annuus (Common sunflower), this protein is Photosystem I assembly protein Ycf3.